The sequence spans 496 residues: MAGSGVYADIIEGDVFKYYSDGEWKKSSSGKSVAIINPTTRMTQFKVQACTQEEVNKAMETAKKVQKQWAKTPLWKRAELLHKAAAILKEHKAAIADCLVKEIAKPAKDSVTEVVRSGDLVSYCAEEGVRLLGEGKFLVSDSFPGNERTKYCLTSKIPLGVILAIPPFNYPVNLAVSKIGPALIAGNALVLKPPTQGAVACLHMVHCFHLAGFPKGLISCITGKGSEIGDFLTMHPGVNCISFTGGDTGIAISKKAGMVPLQMELGGKDACIVLEDADLDLVASNVIKGGFSYSGQRCTAIKVILVMQSVADTLVEKVNAKVAKLTVGPPEDNSDITPVVSESSANFIEGLVKDAKEKGATFCQEYKREGNLIWPLLLDNVKPDMRIAWEEPFGPILPVIRINSAEEGIHHCNASNFGLQGCVFTRDINKAMLISDAMESGTIQINSAPARGPDHFPFQGLKDSGIGSQGITNSINMMTKIKTTVINLPSPSYTMG.

Substrate contacts are provided by residues arginine 116 and 169-170 (NY). Residues lysine 192, threonine 195, and aspartate 230 each contribute to the NADP(+) site. 245-249 (GGDTG) provides a ligand contact to NAD(+). The active-site Proton acceptor is the glutamate 264. Substrate is bound at residue 297-299 (RCT). The Nucleophile role is filled by cysteine 298. Glutamate 391 is a binding site for NADP(+). Residue arginine 451 participates in substrate binding.

The protein belongs to the aldehyde dehydrogenase family.

The protein localises to the cytoplasm. It is found in the cytosol. The enzyme catalyses D-glyceraldehyde 3-phosphate + NADP(+) + H2O = (2R)-3-phosphoglycerate + NADPH + 2 H(+). Competitive inhibition by NADPH, 3-phospho-D-glycerate and ATP. Functionally, important as a means of generating NADPH for biosynthetic reactions. May be a main source of cytosolic NADPH for mannitol biosynthesis in leaves. In Apium graveolens (Celery), this protein is NADP-dependent glyceraldehyde-3-phosphate dehydrogenase.